A 225-amino-acid chain; its full sequence is Small ribosomal subunit protein uS5 (225 aa).

The S5 DRBM domain maps to 57 to 120; the sequence is LEEQVLDVKL…AHAKLSLIKV (64 aa).

The protein belongs to the universal ribosomal protein uS5 family. In terms of assembly, part of the 30S ribosomal subunit. Contacts protein S4.

Functionally, with S4 and S12 plays an important role in translational accuracy. The polypeptide is Small ribosomal subunit protein uS5 (Methanococcus maripaludis (strain DSM 14266 / JCM 13030 / NBRC 101832 / S2 / LL)).